Reading from the N-terminus, the 95-residue chain is UPF0473 protein GWCH70_2487 (95 aa).

Belongs to the UPF0473 family.

The polypeptide is UPF0473 protein GWCH70_2487 (Geobacillus sp. (strain WCH70)).